The primary structure comprises 25 residues: Non-specific lipid-transfer protein 3 (25 aa).

Seeds (at protein level).

Plant non-specific lipid-transfer proteins transfer phospholipids as well as galactolipids across membranes. May play a role in wax or cutin deposition in the cell walls of expanding epidermal cells and certain secretory tissues. Has antibacterial and antifungal activity. Displays antibacterial activity towards both Gram-negative bacteria, P.carotovorum (IC(50)=11.5 uM) and P.syringae (IC(50)=12.0 uM), and Gram-positive bacterium C.michiganensis subsp michiganense (IC(50)=11.2 uM). Also displays antifungal activity towards A.niger VKM F-33 (IC(50)=1.05 uM) and B.cinerea TSKHA (IC(50)=1.88 uM) and relatively moderate activity towards B.sorokiniana VKM F-1448 (IC(50)=1.55 uM). Displays some inhibitory activity towards P.infestans OSV12. This chain is Non-specific lipid-transfer protein 3, found in Nigella sativa (Black cumin).